The sequence spans 367 residues: Ribosomal lysine N-methyltransferase 5 (367 aa).

Residues 55–74 (EGGRKKKRVRRRNKASSVEE) form a disordered region. Over residues 58-68 (RKKKRVRRRNK) the composition is skewed to basic residues. Residues tryptophan 110, 170-172 (GAG), aspartate 192, tryptophan 256, and methionine 288 contribute to the S-adenosyl-L-methionine site.

Belongs to the class I-like SAM-binding methyltransferase superfamily. RKM5 family.

S-adenosyl-L-methionine-dependent protein-lysine N-methyltransferase that monomethylates 60S ribosomal protein L1 (RPL1A and RPL1B) at 'Lys-46'. This is Ribosomal lysine N-methyltransferase 5 (RKM5) from Saccharomyces cerevisiae (strain RM11-1a) (Baker's yeast).